The chain runs to 217 residues: Adenylate kinase (217 aa).

11–16 (GAGKGT) provides a ligand contact to ATP. The interval 31–60 (STGDMFREAMANETPVGLEAKSYIDKGDLV) is NMP. Residues Thr-32, Arg-37, 58-60 (DLV), 86-89 (GFPR), and Gln-93 contribute to the AMP site. The tract at residues 127–165 (ARYICKNCGATYNKISNPTKVEGTCDRCGGHEFFQREDD) is LID. Arg-128 serves as a coordination point for ATP. Residues Cys-131 and Cys-134 each contribute to the Zn(2+) site. 137–138 (TY) lines the ATP pocket. Zn(2+) is bound by residues Cys-151 and Cys-154. Arg-162 and Arg-173 together coordinate AMP. Gln-201 serves as a coordination point for ATP.

This sequence belongs to the adenylate kinase family. Monomer.

Its subcellular location is the cytoplasm. The catalysed reaction is AMP + ATP = 2 ADP. It functions in the pathway purine metabolism; AMP biosynthesis via salvage pathway; AMP from ADP: step 1/1. Its function is as follows. Catalyzes the reversible transfer of the terminal phosphate group between ATP and AMP. Plays an important role in cellular energy homeostasis and in adenine nucleotide metabolism. The chain is Adenylate kinase from Lactobacillus gasseri (strain ATCC 33323 / DSM 20243 / BCRC 14619 / CIP 102991 / JCM 1131 / KCTC 3163 / NCIMB 11718 / NCTC 13722 / AM63).